The chain runs to 362 residues: Protein ABHD12B (362 aa).

The protein belongs to the serine esterase family.

In Homo sapiens (Human), this protein is Protein ABHD12B.